We begin with the raw amino-acid sequence, 223 residues long: Small ribosomal subunit protein uS3 (223 aa).

One can recognise a KH type-2 domain in the interval 38–106 (LKRELKEKLK…EVFIDILEVN (69 aa)).

Belongs to the universal ribosomal protein uS3 family. Part of the 30S ribosomal subunit. Forms a tight complex with proteins S10 and S14.

Binds the lower part of the 30S subunit head. Binds mRNA in the 70S ribosome, positioning it for translation. In Acidobacterium capsulatum (strain ATCC 51196 / DSM 11244 / BCRC 80197 / JCM 7670 / NBRC 15755 / NCIMB 13165 / 161), this protein is Small ribosomal subunit protein uS3.